The following is a 76-amino-acid chain: Large ribosomal subunit protein bL28 (76 aa).

Belongs to the bacterial ribosomal protein bL28 family.

In Opitutus terrae (strain DSM 11246 / JCM 15787 / PB90-1), this protein is Large ribosomal subunit protein bL28.